A 429-amino-acid chain; its full sequence is Probable alcohol acetyltransferase orf1 (429 aa).

Belongs to the alcohol acetyltransferase FCK4 family.

Its pathway is secondary metabolite biosynthesis. Functionally, probable alcohol acetyltransferase; part of the gene cluster that mediates the biosynthesis of the glycolipid biosurfactant ustilagic acid (UA). UA is a secreted cellobiose glycolipid that is toxic for many microorganisms and confers biocontrol activity to U.maydis. UA consists of 15,16-dihydroxypalmitic or 2,15,16-trihydroxypalmitic acid, which is O-glycosidically linked to cellobiose at its terminal hydroxyl group. In addition, the cellobiose moiety is acetylated and acylated with a short-chain hydroxy fatty acid. UA biosynthesis starts with omega-hydroxylation of palmitic acid catalyzed by the cytochrome P450 monooxygenase cyp1. Terminal hydroxylation of palmitic acid precedes subterminal hydroxylation catalyzed by the cytochrome P450 monooxygenase cyp2. Sequential glucosylation of the hydroxy fatty acid is probably catalyzed by the glycosyltransferase ugt1. The cellobiose lipid is further decorated by acetylation of the proximal glucose residue and by acylation with a short-chain beta-hydroxy fatty acid at the distal glucose residue. The acyltransferase uat1 may be a good candidate for catalyzing either acetylation or acylation of the cellobiose lipid. The fatty acid synthase fas2 may be involved in synthesis of the carbon backbone of the short-chain beta-hydroxy fatty acid esterified to the cellobiose disaccharide. The secreted UA consists of a mixture of both alpha-hydroxylated and non-hydroxylated glycolipids; therefore, alpha-hydroxylation of the long-chain fatty, catalyzed by the fatty acid hydroxylase ahd1, occurs late in UA biosynthesis and may be the last step before secretion. This is Probable alcohol acetyltransferase orf1 from Mycosarcoma maydis (Corn smut fungus).